A 782-amino-acid chain; its full sequence is General transcription and DNA repair factor IIH helicase/translocase subunit XPB (782 aa).

The segment covering 1-11 (MGKRDRADREK) has biased composition (basic and acidic residues). Residues 1 to 51 (MGKRDRADREKKKSKKRHYEDEEDEEDDAPGNDTQEAVPSAAGKQVDESGT) are disordered. A Nuclear localization signal motif is present at residues 6–18 (RADREKKKSKKRH). Acidic residues predominate over residues 21–30 (DEEDEEDDAP). In terms of domain architecture, Helicase ATP-binding spans 327-488 (MFGNGRARSG…DLNFLIGPKL (162 aa)). 340 to 347 (LPCGAGKS) contributes to the ATP binding site. Positions 441–444 (DEVH) match the DEVH box motif. Residues 542–702 (RACQFLIKFH…LAGMEEEDLA (161 aa)) enclose the Helicase C-terminal domain. Serine 686 bears the Phosphoserine mark. Serine 751 is subject to Phosphoserine; by CK2.

It belongs to the helicase family. RAD25/XPB subfamily. As to quaternary structure, component of the 7-subunit TFIIH core complex composed of XPB/ERCC3, XPD/ERCC2, GTF2H1, GTF2H2, GTF2H3, GTF2H4 and GTF2H5, which is active in NER. The core complex associates with the 3-subunit CDK-activating kinase (CAK) module composed of CCNH/cyclin H, CDK7 and MNAT1 to form the 10-subunit holoenzyme (holo-TFIIH) active in transcription. Interacts with PUF60. Interacts with ATF7IP. Interacts with KAT2A; leading to KAT2A recruitment to promoters and acetylation of histones. Part of TBP-based Pol II pre-initiation complex (PIC), in which Pol II core assembles with general transcription factors and other specific initiation factors including GTF2E1, GTF2E2, GTF2F1, GTF2F2, TCEA1, ERCC2, ERCC3, GTF2H2, GTF2H3, GTF2H4, GTF2H5, GTF2A1, GTF2A2, GTF2B and TBP; this large multi-subunit PIC complex mediates DNA unwinding and targets Pol II core to the transcription start site where the first phosphodiester bond forms. Phosphorylation on Ser-751 by CK2 controls the 5'-excision activity of ERCC1-XPF endonuclease; phosphorylated protein inhibits the excision activity and thus NER. Dephosphorylation reactivates the 5'-excision step. Phosphorylation has no effect on transcription or the 3'-5' helicase activity.

Its subcellular location is the nucleus. It carries out the reaction Couples ATP hydrolysis with the unwinding of duplex DNA by translocating in the 3'-5' direction.. It catalyses the reaction ATP + H2O = ADP + phosphate + H(+). Phosphorylation on Ser-751 by CK2 controls the 5'-excision activity of ERCC1-XPF endonuclease; phosphorylated protein inhibits the excision activity and thus NER. ATPase activity is stimulated by TFIIH subunit p52 (GTF2H4). DNA translocase activity by this subunit in TFIIH is stimulated by XPA, ERCC5/XPG and XFP plus ERCC1. Functionally, ATP-dependent 3'-5' DNA helicase/translocase; binds dsDNA rather than ssDNA, unzipping it in a translocase rather than classical helicase activity. Component of the general transcription and DNA repair factor IIH (TFIIH) core complex. When complexed to CDK-activating kinase (CAK), involved in RNA transcription by RNA polymerase II. The ATPase activity of XPB/ERCC3, but not its helicase activity, is required for DNA opening; it may wrap around the damaged DNA wedging it open, causing localized melting and twisting that allows XPD/ERCC2 helicase to anchor. The ATP-dependent helicase activity of XPB/ERCC3 may be required for promoter escape. Also involved in transcription-coupled nucleotide excision repair (NER) of damaged DNA. In NER, TFIIH acts by opening DNA around the lesion to allow the excision of the damaged oligonucleotide and its replacement by a new DNA fragment. The structure of the TFIIH transcription complex differs from the NER-TFIIH complex; large movements by XPD/ERCC2 and XPB/ERCC3 are stabilized by XPA. The chain is General transcription and DNA repair factor IIH helicase/translocase subunit XPB (ERCC3) from Bos taurus (Bovine).